Reading from the N-terminus, the 352-residue chain is Quinolinate synthase (352 aa).

The iminosuccinate site is built by His48 and Ser69. Cys114 is a [4Fe-4S] cluster binding site. Iminosuccinate contacts are provided by residues 140–142 (YAN) and Ser157. Residue Cys201 participates in [4Fe-4S] cluster binding. Iminosuccinate-binding positions include 227-229 (HPE) and Thr244. Position 298 (Cys298) interacts with [4Fe-4S] cluster.

It belongs to the quinolinate synthase family. Type 1 subfamily. [4Fe-4S] cluster is required as a cofactor.

The protein localises to the cytoplasm. The enzyme catalyses iminosuccinate + dihydroxyacetone phosphate = quinolinate + phosphate + 2 H2O + H(+). Its pathway is cofactor biosynthesis; NAD(+) biosynthesis; quinolinate from iminoaspartate: step 1/1. Catalyzes the condensation of iminoaspartate with dihydroxyacetone phosphate to form quinolinate. This chain is Quinolinate synthase, found in Pseudomonas fluorescens (strain Pf0-1).